The following is a 476-amino-acid chain: Adenosylhomocysteinase (476 aa).

Substrate contacts are provided by Thr-67, Asp-142, and Glu-202. 203 to 205 (TTT) lines the NAD(+) pocket. Substrate-binding residues include Lys-232 and Asp-236. Residues Asn-237, 266-271 (GYGDVG), Glu-289, Asn-324, 345-347 (IGH), and Asn-390 each bind NAD(+).

This sequence belongs to the adenosylhomocysteinase family. NAD(+) serves as cofactor.

The protein localises to the cytoplasm. It carries out the reaction S-adenosyl-L-homocysteine + H2O = L-homocysteine + adenosine. It participates in amino-acid biosynthesis; L-homocysteine biosynthesis; L-homocysteine from S-adenosyl-L-homocysteine: step 1/1. Its function is as follows. May play a key role in the regulation of the intracellular concentration of adenosylhomocysteine. The sequence is that of Adenosylhomocysteinase from Parasynechococcus marenigrum (strain WH8102).